A 355-amino-acid chain; its full sequence is Anthranilate phosphoribosyltransferase (355 aa).

5-phospho-alpha-D-ribose 1-diphosphate is bound by residues glycine 85, 88–89 (GD), threonine 93, 95–98 (NIST), 113–121 (KHGNRAASS), and serine 125. Anthranilate is bound at residue glycine 85. Serine 97 contributes to the Mg(2+) binding site. Asparagine 116 contacts anthranilate. Position 171 (arginine 171) interacts with anthranilate. The Mg(2+) site is built by aspartate 229 and glutamate 230.

This sequence belongs to the anthranilate phosphoribosyltransferase family. As to quaternary structure, homodimer. It depends on Mg(2+) as a cofactor.

It carries out the reaction N-(5-phospho-beta-D-ribosyl)anthranilate + diphosphate = 5-phospho-alpha-D-ribose 1-diphosphate + anthranilate. It participates in amino-acid biosynthesis; L-tryptophan biosynthesis; L-tryptophan from chorismate: step 2/5. In terms of biological role, catalyzes the transfer of the phosphoribosyl group of 5-phosphorylribose-1-pyrophosphate (PRPP) to anthranilate to yield N-(5'-phosphoribosyl)-anthranilate (PRA). This chain is Anthranilate phosphoribosyltransferase, found in Acidothermus cellulolyticus (strain ATCC 43068 / DSM 8971 / 11B).